A 150-amino-acid chain; its full sequence is Putative pre-16S rRNA nuclease (150 aa).

The protein belongs to the YqgF nuclease family.

It is found in the cytoplasm. Could be a nuclease involved in processing of the 5'-end of pre-16S rRNA. This chain is Putative pre-16S rRNA nuclease, found in Syntrophus aciditrophicus (strain SB).